The sequence spans 405 residues: Imidazolonepropionase (405 aa).

Positions 73 and 75 each coordinate Fe(3+). Histidine 73 and histidine 75 together coordinate Zn(2+). Positions 82, 145, and 178 each coordinate 4-imidazolone-5-propanoate. Residue tyrosine 145 participates in N-formimidoyl-L-glutamate binding. Histidine 243 contacts Fe(3+). Histidine 243 is a Zn(2+) binding site. Residue glutamine 246 coordinates 4-imidazolone-5-propanoate. Residue aspartate 318 participates in Fe(3+) binding. Zn(2+) is bound at residue aspartate 318. Residues asparagine 320 and glycine 322 each coordinate N-formimidoyl-L-glutamate. Threonine 323 contributes to the 4-imidazolone-5-propanoate binding site.

Belongs to the metallo-dependent hydrolases superfamily. HutI family. Zn(2+) serves as cofactor. Fe(3+) is required as a cofactor.

The protein resides in the cytoplasm. The enzyme catalyses 4-imidazolone-5-propanoate + H2O = N-formimidoyl-L-glutamate. The protein operates within amino-acid degradation; L-histidine degradation into L-glutamate; N-formimidoyl-L-glutamate from L-histidine: step 3/3. In terms of biological role, catalyzes the hydrolytic cleavage of the carbon-nitrogen bond in imidazolone-5-propanoate to yield N-formimidoyl-L-glutamate. It is the third step in the universal histidine degradation pathway. This Brucella suis biovar 1 (strain 1330) protein is Imidazolonepropionase.